The sequence spans 1082 residues: Sodium/potassium exporting P-type ATPase 2 (1082 aa).

Topologically, residues 1–75 are cytoplasmic; that stretch reads MSSINTNVAE…GANTLGDGDK (75 aa). The helical transmembrane segment at 76–96 threads the bilayer; sequence ISLTKIIAHQVCNAMILVLII. Residues 97–98 lie on the Extracellular side of the membrane; that stretch reads SM. The helical transmembrane segment at 99 to 119 threads the bilayer; the sequence is VIALAIKDWISGGVIGFVVLI. At 120-308 the chain is on the cytoplasmic side; it reads NISVGFVQEY…VGTPLQRKLS (189 aa). The helical transmembrane segment at 309–329 threads the bilayer; the sequence is WLAIFLFWGCRYFCNYCNGIP. Residues 330 to 336 lie on the Extracellular side of the membrane; sequence KNRVNKE. The helical transmembrane segment at 337–357 threads the bilayer; sequence VAIYAICVALSMIPSALIVVL. At 358 to 807 the chain is on the cytoplasmic side; it reads TITMAVGAQV…RMSSNIQKFV (450 aa). The 4-aspartylphosphate intermediate role is filled by Asp393. Residues Asp393 and Thr395 each contribute to the Mg(2+) site. Positions 395, 499, 552, 604, 664, 665, 666, 723, and 729 each coordinate ATP. Asp748 is a binding site for Mg(2+). Asn751 is a binding site for ATP. Residues 808 to 828 form a helical membrane-spanning segment; the sequence is LQLLAENVAQALYLMVGLAFI. Residues 829–832 lie on the Extracellular side of the membrane; it reads DDSG. A helical membrane pass occupies residues 833-853; the sequence is LSVFPLSPVEVLWILVVTSCF. Residues 854–884 are Cytoplasmic-facing; sequence PAMDLGQERASDDILEESPNSTIFTWEVIID. A helical membrane pass occupies residues 885–905; sequence MIVYGFWMAVCCLVCFVIIVY. The Extracellular segment spans residues 906 to 935; the sequence is GEGDPYLGVNCNKSSSSNSDVCELVFRGRS. Residues 936-956 form a helical membrane-spanning segment; that stretch reads ASFATMTWCALILAWECIHPY. The Cytoplasmic segment spans residues 957–983; it reads NSLFYMRQDTDHPWWKQTVIDLWDNQF. Residues 984–1004 traverse the membrane as a helical segment; the sequence is LFWSVAIGFISVFPVVYIPVI. Over 1005-1007 the chain is Extracellular; sequence NTK. The chain crosses the membrane as a helical span at residues 1008–1028; that stretch reads VFLHGPIGYEWGLAVGFSILF. Topologically, residues 1029–1082 are cytoplasmic; that stretch reads LAGSELWKWIKRIHKRKANKKAKNPEYELERSDPFKKYASFSRSNTMDRPELMV.

The protein belongs to the cation transport ATPase (P-type) (TC 3.A.3) family. Type IID subfamily. Mg(2+) serves as cofactor. The active site is phosphorylated in presence of sodium or potassium and in conditions of higher pH. Not phosphorylated in presence of calcium ions.

Its subcellular location is the cell membrane. The enzyme catalyses Na(+)(in) + ATP + H2O = Na(+)(out) + ADP + phosphate + H(+). It catalyses the reaction K(+)(in) + ATP + H2O = K(+)(out) + ADP + phosphate + H(+). In terms of biological role, catalyzes the hydrolysis of ATP coupled with the export of sodium and potassium from the cell. May be an inefficient sodium exporter. May transport other cations such as lithium. Sodium/potassium efflux ATPases are involved in salt tolerance and maintaining the membrane potential across the plasma membrane in high salinity (Na+) or alkaline (K+) environments. The sequence is that of Sodium/potassium exporting P-type ATPase 2 from Schwanniomyces occidentalis (Yeast).